The sequence spans 178 residues: Large ribosomal subunit protein uL6 (178 aa).

This sequence belongs to the universal ribosomal protein uL6 family. Part of the 50S ribosomal subunit.

This protein binds to the 23S rRNA, and is important in its secondary structure. It is located near the subunit interface in the base of the L7/L12 stalk, and near the tRNA binding site of the peptidyltransferase center. The protein is Large ribosomal subunit protein uL6 of Halalkalibacterium halodurans (strain ATCC BAA-125 / DSM 18197 / FERM 7344 / JCM 9153 / C-125) (Bacillus halodurans).